We begin with the raw amino-acid sequence, 272 residues long: S-adenosylmethionine decarboxylase proenzyme (272 aa).

Catalysis depends on Ser-122, which acts as the Schiff-base intermediate with substrate; via pyruvic acid. Ser-122 carries the post-translational modification Pyruvic acid (Ser); by autocatalysis. His-127 (proton acceptor; for processing activity) is an active-site residue. The Proton donor; for catalytic activity role is filled by Cys-150.

This sequence belongs to the prokaryotic AdoMetDC family. Type 2 subfamily. In terms of assembly, heterooctamer of four alpha and four beta chains arranged as a tetramer of alpha/beta heterodimers. Requires pyruvate as cofactor. Post-translationally, is synthesized initially as an inactive proenzyme. Formation of the active enzyme involves a self-maturation process in which the active site pyruvoyl group is generated from an internal serine residue via an autocatalytic post-translational modification. Two non-identical subunits are generated from the proenzyme in this reaction, and the pyruvate is formed at the N-terminus of the alpha chain, which is derived from the carboxyl end of the proenzyme. The post-translation cleavage follows an unusual pathway, termed non-hydrolytic serinolysis, in which the side chain hydroxyl group of the serine supplies its oxygen atom to form the C-terminus of the beta chain, while the remainder of the serine residue undergoes an oxidative deamination to produce ammonia and the pyruvoyl group blocking the N-terminus of the alpha chain.

The enzyme catalyses S-adenosyl-L-methionine + H(+) = S-adenosyl 3-(methylsulfanyl)propylamine + CO2. It functions in the pathway amine and polyamine biosynthesis; S-adenosylmethioninamine biosynthesis; S-adenosylmethioninamine from S-adenosyl-L-methionine: step 1/1. Its function is as follows. Catalyzes the decarboxylation of S-adenosylmethionine to S-adenosylmethioninamine (dcAdoMet), the propylamine donor required for the synthesis of the polyamines spermine and spermidine from the diamine putrescine. The chain is S-adenosylmethionine decarboxylase proenzyme from Clostridium botulinum (strain Eklund 17B / Type B).